The primary structure comprises 56 residues: Venom peptide 5 (56 aa).

An N-terminal signal peptide occupies residues 1-26 (MKTASFILSFVVLLIVIITWIGEVSA). Positions 27-42 (VSEPEPVAKATAHAAA) are excised as a propeptide. Cysteine 49 and cysteine 54 are joined by a disulfide.

Probably contains 1 disulfide bond, which may be crucial for activity, since the linear peptide without disulfide bond is inactive. As to expression, expressed by the venom gland.

Its subcellular location is the secreted. The sequence is that of Venom peptide 5 from Eumenes pomiformis (Potter wasp).